Consider the following 153-residue polypeptide: Vasotocin-neurophysin VT 1 (153 aa).

The first 19 residues, 1 to 19 (MPQCALLLSLLGLLALSSA), serve as a signal peptide directing secretion. Cys-20 and Cys-25 are joined by a disulfide. Gly-28 is modified (glycine amide). Disulfide bonds link Cys-41/Cys-85, Cys-44/Cys-58, Cys-52/Cys-75, Cys-59/Cys-65, Cys-92/Cys-105, Cys-99/Cys-117, and Cys-106/Cys-111.

Belongs to the vasopressin/oxytocin family. Seven disulfide bonds are present in neurophysin.

Its subcellular location is the secreted. In terms of biological role, vasotocin is probably an antidiuretic hormone. The polypeptide is Vasotocin-neurophysin VT 1 (Takifugu rubripes (Japanese pufferfish)).